The following is a 198-amino-acid chain: Na(+)-translocating NADH-quinone reductase subunit E (198 aa).

6 helical membrane passes run A11–V31, V35–V55, F77–I97, G110–V130, V140–I160, and L176–V196.

Belongs to the NqrDE/RnfAE family. Composed of six subunits; NqrA, NqrB, NqrC, NqrD, NqrE and NqrF.

The protein resides in the cell inner membrane. The enzyme catalyses a ubiquinone + n Na(+)(in) + NADH + H(+) = a ubiquinol + n Na(+)(out) + NAD(+). Its function is as follows. NQR complex catalyzes the reduction of ubiquinone-1 to ubiquinol by two successive reactions, coupled with the transport of Na(+) ions from the cytoplasm to the periplasm. NqrA to NqrE are probably involved in the second step, the conversion of ubisemiquinone to ubiquinol. This is Na(+)-translocating NADH-quinone reductase subunit E from Serratia proteamaculans (strain 568).